Here is a 156-residue protein sequence, read N- to C-terminus: Small ribosomal subunit protein uS7c (156 aa).

This sequence belongs to the universal ribosomal protein uS7 family. As to quaternary structure, part of the 30S ribosomal subunit.

The protein localises to the plastid. It is found in the chloroplast. One of the primary rRNA binding proteins, it binds directly to 16S rRNA where it nucleates assembly of the head domain of the 30S subunit. In Cycas revoluta (Sago palm), this protein is Small ribosomal subunit protein uS7c (rps7).